A 154-amino-acid polypeptide reads, in one-letter code: 6,7-dimethyl-8-ribityllumazine synthase (154 aa).

Residues Phe26, 60 to 62 (ALE), and 84 to 86 (CII) contribute to the 5-amino-6-(D-ribitylamino)uracil site. 89–90 (QT) contacts (2S)-2-hydroxy-3-oxobutyl phosphate. Residue His92 is the Proton donor of the active site. Residue Asn117 coordinates 5-amino-6-(D-ribitylamino)uracil. (2S)-2-hydroxy-3-oxobutyl phosphate is bound at residue Arg131.

Belongs to the DMRL synthase family.

The enzyme catalyses (2S)-2-hydroxy-3-oxobutyl phosphate + 5-amino-6-(D-ribitylamino)uracil = 6,7-dimethyl-8-(1-D-ribityl)lumazine + phosphate + 2 H2O + H(+). It functions in the pathway cofactor biosynthesis; riboflavin biosynthesis; riboflavin from 2-hydroxy-3-oxobutyl phosphate and 5-amino-6-(D-ribitylamino)uracil: step 1/2. Its function is as follows. Catalyzes the formation of 6,7-dimethyl-8-ribityllumazine by condensation of 5-amino-6-(D-ribitylamino)uracil with 3,4-dihydroxy-2-butanone 4-phosphate. This is the penultimate step in the biosynthesis of riboflavin. The protein is 6,7-dimethyl-8-ribityllumazine synthase of Verminephrobacter eiseniae (strain EF01-2).